We begin with the raw amino-acid sequence, 265 residues long: 4-diphosphocytidyl-2-C-methyl-D-erythritol kinase (265 aa).

Lys-8 is an active-site residue. 95–105 (PIGAGLGGGSS) is a binding site for ATP. Asp-135 is an active-site residue.

This sequence belongs to the GHMP kinase family. IspE subfamily.

It carries out the reaction 4-CDP-2-C-methyl-D-erythritol + ATP = 4-CDP-2-C-methyl-D-erythritol 2-phosphate + ADP + H(+). It functions in the pathway isoprenoid biosynthesis; isopentenyl diphosphate biosynthesis via DXP pathway; isopentenyl diphosphate from 1-deoxy-D-xylulose 5-phosphate: step 3/6. In terms of biological role, catalyzes the phosphorylation of the position 2 hydroxy group of 4-diphosphocytidyl-2C-methyl-D-erythritol. The sequence is that of 4-diphosphocytidyl-2-C-methyl-D-erythritol kinase from Ureaplasma parvum serovar 3 (strain ATCC 27815 / 27 / NCTC 11736).